A 174-amino-acid chain; its full sequence is Inactive signal peptidase IA (174 aa).

Residues 1 to 7 (MKKVVKY) lie on the Cytoplasmic side of the membrane. A helical transmembrane segment spans residues 8 to 28 (LISLILAIIIVLFVQTFVIVG). Residues 29–174 (HVIPNNDMSP…FSKWTIQFKS (146 aa)) are Extracellular-facing.

This sequence belongs to the peptidase S26 family.

It localises to the cell membrane. In terms of biological role, catalytically inactive. This chain is Inactive signal peptidase IA (spsA), found in Staphylococcus aureus (strain MRSA252).